A 301-amino-acid chain; its full sequence is Large ribosomal subunit protein uL4 (301 aa).

The interval 1 to 223 is large ribosomal subunit protein uL4; that stretch reads MNETKTIDVL…TQALSAQPEV (223 aa). The disordered stretch occupies residues 49–105; the sequence is QGTHATKTRGQVSGGGKKPWRQKGTGRARQGSTRAPQWVGGGTVHGPQPRSYAQRTP. Positions 224-301 are unknown; sequence PETNVADQHP…KSDSEKEDAK (78 aa).

It belongs to the universal ribosomal protein uL4 family. In terms of assembly, part of the 50S ribosomal subunit.

In terms of biological role, one of the primary rRNA binding proteins, this protein initially binds near the 5'-end of the 23S rRNA. It is important during the early stages of 50S assembly. It makes multiple contacts with different domains of the 23S rRNA in the assembled 50S subunit and ribosome. Forms part of the polypeptide exit tunnel. In Cutibacterium acnes (strain DSM 16379 / KPA171202) (Propionibacterium acnes), this protein is Large ribosomal subunit protein uL4.